Here is a 273-residue protein sequence, read N- to C-terminus: Formamidopyrimidine-DNA glycosylase (273 aa).

Proline 2 serves as the catalytic Schiff-base intermediate with DNA. Glutamate 3 serves as the catalytic Proton donor. The active-site Proton donor; for beta-elimination activity is lysine 58. Residues histidine 92, arginine 111, and lysine 153 each contribute to the DNA site. The FPG-type zinc finger occupies 238-272; it reads KVYGREGQSCLSCSSTIIKIKHSGRSTFYCKTCQY. Residue arginine 262 is the Proton donor; for delta-elimination activity of the active site.

The protein belongs to the FPG family. Monomer. Requires Zn(2+) as cofactor.

It carries out the reaction Hydrolysis of DNA containing ring-opened 7-methylguanine residues, releasing 2,6-diamino-4-hydroxy-5-(N-methyl)formamidopyrimidine.. The enzyme catalyses 2'-deoxyribonucleotide-(2'-deoxyribose 5'-phosphate)-2'-deoxyribonucleotide-DNA = a 3'-end 2'-deoxyribonucleotide-(2,3-dehydro-2,3-deoxyribose 5'-phosphate)-DNA + a 5'-end 5'-phospho-2'-deoxyribonucleoside-DNA + H(+). Its function is as follows. Involved in base excision repair of DNA damaged by oxidation or by mutagenic agents. Acts as a DNA glycosylase that recognizes and removes damaged bases. Has a preference for oxidized purines, such as 7,8-dihydro-8-oxoguanine (8-oxoG). Has AP (apurinic/apyrimidinic) lyase activity and introduces nicks in the DNA strand. Cleaves the DNA backbone by beta-delta elimination to generate a single-strand break at the site of the removed base with both 3'- and 5'-phosphates. The sequence is that of Formamidopyrimidine-DNA glycosylase from Rickettsia africae (strain ESF-5).